Consider the following 237-residue polypeptide: UPF0280 protein Mpal_1292 (237 aa).

The protein belongs to the UPF0280 family.

This chain is UPF0280 protein Mpal_1292, found in Methanosphaerula palustris (strain ATCC BAA-1556 / DSM 19958 / E1-9c).